Here is a 122-residue protein sequence, read N- to C-terminus: Large ribosomal subunit protein uL14 (122 aa).

It belongs to the universal ribosomal protein uL14 family. In terms of assembly, part of the 50S ribosomal subunit. Forms a cluster with proteins L3 and L19. In the 70S ribosome, L14 and L19 interact and together make contacts with the 16S rRNA in bridges B5 and B8.

Binds to 23S rRNA. Forms part of two intersubunit bridges in the 70S ribosome. The polypeptide is Large ribosomal subunit protein uL14 (Rhodococcus erythropolis (strain PR4 / NBRC 100887)).